We begin with the raw amino-acid sequence, 408 residues long: Serine/threonine transporter SstT (408 aa).

10 helical membrane passes run 15-35, 49-69, 85-105, 142-162, 192-212, 218-238, 246-268, 289-309, 317-337, and 362-382; these read MGLI…AVIW, FISA…TAAI, LLYV…SFVF, ALME…GLML, PLGI…GALL, LAVI…LIVF, YPLV…SSAA, ISIP…ISVI, LGIP…SIAA, and TEVA…QDST.

It belongs to the dicarboxylate/amino acid:cation symporter (DAACS) (TC 2.A.23) family.

It is found in the cell inner membrane. The catalysed reaction is L-serine(in) + Na(+)(in) = L-serine(out) + Na(+)(out). It catalyses the reaction L-threonine(in) + Na(+)(in) = L-threonine(out) + Na(+)(out). Functionally, involved in the import of serine and threonine into the cell, with the concomitant import of sodium (symport system). The sequence is that of Serine/threonine transporter SstT from Marinobacter nauticus (strain ATCC 700491 / DSM 11845 / VT8) (Marinobacter aquaeolei).